Reading from the N-terminus, the 29-residue chain is Dermaseptin-J9 (29 aa).

Expressed by the skin glands.

It is found in the secreted. Functionally, has antimicrobial activity. This Phasmahyla jandaia (Jandaia leaf frog) protein is Dermaseptin-J9.